Here is a 418-residue protein sequence, read N- to C-terminus: Synaptotagmin-15 (418 aa).

Over Met-1–Gln-4 the chain is Extracellular. The helical; Signal-anchor for type III membrane protein transmembrane segment at Leu-5–Trp-27 threads the bilayer. Residues Arg-28 to Pro-418 lie on the Cytoplasmic side of the membrane. C2 domains are found at residues Cys-144 to Ile-261 and Glu-275 to Gly-396.

The protein belongs to the synaptotagmin family. In terms of assembly, homodimer. As to expression, isoform 1 and isoform 2 are expressed in heart, lung, skeletal muscle and testis; not detected in brain, liver and kidney. Isoform 1 is expressed in spleen.

The protein localises to the membrane. May be involved in the trafficking and exocytosis of secretory vesicles in non-neuronal tissues. This chain is Synaptotagmin-15 (Syt15), found in Mus musculus (Mouse).